The primary structure comprises 597 residues: Phosphomethylpyrimidine synthase (597 aa).

Substrate-binding positions include Asn-207, Met-236, Tyr-265, His-301, 321-323 (SRG), 362-365 (DGLR), and Glu-401. His-405 provides a ligand contact to Zn(2+). Tyr-428 is a binding site for substrate. His-469 serves as a coordination point for Zn(2+). Cys-549, Cys-552, and Cys-557 together coordinate [4Fe-4S] cluster.

This sequence belongs to the ThiC family. As to quaternary structure, homodimer. [4Fe-4S] cluster serves as cofactor.

It catalyses the reaction 5-amino-1-(5-phospho-beta-D-ribosyl)imidazole + S-adenosyl-L-methionine = 4-amino-2-methyl-5-(phosphooxymethyl)pyrimidine + CO + 5'-deoxyadenosine + formate + L-methionine + 3 H(+). The protein operates within cofactor biosynthesis; thiamine diphosphate biosynthesis. Functionally, catalyzes the synthesis of the hydroxymethylpyrimidine phosphate (HMP-P) moiety of thiamine from aminoimidazole ribotide (AIR) in a radical S-adenosyl-L-methionine (SAM)-dependent reaction. The chain is Phosphomethylpyrimidine synthase from Gluconobacter oxydans (strain 621H) (Gluconobacter suboxydans).